Here is a 97-residue protein sequence, read N- to C-terminus: Small ribosomal subunit protein bS20 (97 aa).

The interval 1-22 (MANSKSALKRIRTSERNRLRNK) is disordered.

Belongs to the bacterial ribosomal protein bS20 family.

In terms of biological role, binds directly to 16S ribosomal RNA. This chain is Small ribosomal subunit protein bS20, found in Crocosphaera subtropica (strain ATCC 51142 / BH68) (Cyanothece sp. (strain ATCC 51142)).